Reading from the N-terminus, the 160-residue chain is Phosphopantetheine adenylyltransferase (160 aa).

Thr-10 provides a ligand contact to substrate. ATP-binding positions include 10–11 and His-18; that span reads TF. Substrate is bound by residues Lys-42, Leu-74, and Arg-88. ATP-binding positions include 89 to 91, Glu-99, and 124 to 130; these read GLR and NSFISST.

Belongs to the bacterial CoaD family. In terms of assembly, homohexamer. Mg(2+) is required as a cofactor.

The protein resides in the cytoplasm. It carries out the reaction (R)-4'-phosphopantetheine + ATP + H(+) = 3'-dephospho-CoA + diphosphate. It functions in the pathway cofactor biosynthesis; coenzyme A biosynthesis; CoA from (R)-pantothenate: step 4/5. In terms of biological role, reversibly transfers an adenylyl group from ATP to 4'-phosphopantetheine, yielding dephospho-CoA (dPCoA) and pyrophosphate. The chain is Phosphopantetheine adenylyltransferase from Shewanella piezotolerans (strain WP3 / JCM 13877).